Here is a 775-residue protein sequence, read N- to C-terminus: Subtilisin-like protease SBT4.1 (775 aa).

Residues 1–23 form the signal peptide; sequence MAIAFHTFLLQLLLFFFASFAEA. Residue N24 is glycosylated (N-linked (GlcNAc...) asparagine). The propeptide at 24-106 is activation peptide; that stretch reads NDSRKTYLVQ…VSRSRNLKLQ (83 aa). The Inhibitor I9 domain maps to 29–105; the sequence is TYLVQMKVGG…EVSRSRNLKL (77 aa). The region spanning 110-606 is the Peptidase S8 domain; that stretch reads SWDFMNLTLK…SGHLNATKVR (497 aa). 2 N-linked (GlcNAc...) asparagine glycosylation sites follow: N115 and N126. The active-site Charge relay system is the D136. An N-linked (GlcNAc...) asparagine glycan is attached at N162. H196 serves as the catalytic Charge relay system. The PA domain occupies 365–459; the sequence is FYPLLNEKAP…FLDEQKKGKL (95 aa). A glycan (N-linked (GlcNAc...) asparagine) is linked at N437. S551 acts as the Charge relay system in catalysis. N-linked (GlcNAc...) asparagine glycosylation occurs at N601.

The protein belongs to the peptidase S8 family. The C-terminal propeptide is autocleaved.

The protein localises to the secreted. This Arabidopsis thaliana (Mouse-ear cress) protein is Subtilisin-like protease SBT4.1.